Reading from the N-terminus, the 358-residue chain is DNA polymerase IV (358 aa).

Positions 4 to 185 (IIHIDMDCYF…LSLRKIPGVG (182 aa)) constitute a UmuC domain. Mg(2+)-binding residues include D8 and D103. E104 is an active-site residue.

It belongs to the DNA polymerase type-Y family. As to quaternary structure, monomer. Mg(2+) is required as a cofactor.

It is found in the cytoplasm. It catalyses the reaction DNA(n) + a 2'-deoxyribonucleoside 5'-triphosphate = DNA(n+1) + diphosphate. Its function is as follows. Poorly processive, error-prone DNA polymerase involved in untargeted mutagenesis. Copies undamaged DNA at stalled replication forks, which arise in vivo from mismatched or misaligned primer ends. These misaligned primers can be extended by PolIV. Exhibits no 3'-5' exonuclease (proofreading) activity. May be involved in translesional synthesis, in conjunction with the beta clamp from PolIII. The chain is DNA polymerase IV from Shewanella baltica (strain OS155 / ATCC BAA-1091).